Reading from the N-terminus, the 334-residue chain is RNA 3'-terminal phosphate cyclase (334 aa).

Residue 279–282 participates in ATP binding; it reads HMGD. The active-site Tele-AMP-histidine intermediate is His303.

It belongs to the RNA 3'-terminal cyclase family. Type 1 subfamily.

It localises to the cytoplasm. The enzyme catalyses a 3'-end 3'-phospho-ribonucleotide-RNA + ATP = a 3'-end 2',3'-cyclophospho-ribonucleotide-RNA + AMP + diphosphate. In terms of biological role, catalyzes the conversion of 3'-phosphate to a 2',3'-cyclic phosphodiester at the end of RNA. The mechanism of action of the enzyme occurs in 3 steps: (A) adenylation of the enzyme by ATP; (B) transfer of adenylate to an RNA-N3'P to produce RNA-N3'PP5'A; (C) and attack of the adjacent 2'-hydroxyl on the 3'-phosphorus in the diester linkage to produce the cyclic end product. The biological role of this enzyme is unknown but it is likely to function in some aspects of cellular RNA processing. The protein is RNA 3'-terminal phosphate cyclase of Metallosphaera sedula (strain ATCC 51363 / DSM 5348 / JCM 9185 / NBRC 15509 / TH2).